The sequence spans 503 residues: Maturase K (503 aa).

This sequence belongs to the intron maturase 2 family. MatK subfamily.

The protein localises to the plastid. It localises to the chloroplast. Usually encoded in the trnK tRNA gene intron. Probably assists in splicing its own and other chloroplast group II introns. In Actinodium cunninghamii (Albany daisy), this protein is Maturase K.